Here is a 427-residue protein sequence, read N- to C-terminus: FAD-dependent monooxygenase OpS4 (427 aa).

A signal peptide spans 1–22 (MGSIREPLHLVVIGGGLAGLSA). An FAD-binding site is contributed by glutamate 37. Asparagine 54 carries N-linked (GlcNAc...) asparagine glycosylation. FAD contacts are provided by arginine 112, aspartate 306, and alanine 319.

This sequence belongs to the paxM FAD-dependent monooxygenase family. The cofactor is FAD.

It participates in secondary metabolite biosynthesis. In terms of biological role, FAD-dependent monooxygenase; part of the gene cluster that mediates the biosynthesis of the bibenzoquinone oosporein, a metabolite required for fungal virulence that acts by evading host immunity to facilitate fungal multiplication in insects. The non-reducing polyketide synthase OpS1 produces orsellinic acid by condensing acetyl-CoA with 3 malonyl-CoA units. Orsellinic acid is then hydroxylated to benzenetriol by the hydroxylase OpS4. The intermediate is oxidized either nonenzymatically to 5,5'-dideoxy-oosporein or enzymatically to benzenetetrol by the oxidoreductase OpS7. The latter is further dimerized to oosporein by the catalase OpS5. OpS6 probably functions en route for protecting cells against oxidative stress by scavenging any leaked free radical form of benzenetetrol by activating the thiol group of glutathione. This Beauveria bassiana (strain ARSEF 2860) (White muscardine disease fungus) protein is FAD-dependent monooxygenase OpS4.